A 100-amino-acid polypeptide reads, in one-letter code: Large ribosomal subunit protein uL23 (100 aa).

It belongs to the universal ribosomal protein uL23 family. As to quaternary structure, part of the 50S ribosomal subunit. Contacts protein L29, and trigger factor when it is bound to the ribosome.

Functionally, one of the early assembly proteins it binds 23S rRNA. One of the proteins that surrounds the polypeptide exit tunnel on the outside of the ribosome. Forms the main docking site for trigger factor binding to the ribosome. The protein is Large ribosomal subunit protein uL23 of Mycolicibacterium smegmatis (strain ATCC 700084 / mc(2)155) (Mycobacterium smegmatis).